Reading from the N-terminus, the 208-residue chain is 3-isopropylmalate dehydratase small subunit 2 (208 aa).

Belongs to the LeuD family. LeuD type 1 subfamily. As to quaternary structure, heterodimer of LeuC and LeuD.

It catalyses the reaction (2R,3S)-3-isopropylmalate = (2S)-2-isopropylmalate. It participates in amino-acid biosynthesis; L-leucine biosynthesis; L-leucine from 3-methyl-2-oxobutanoate: step 2/4. In terms of biological role, catalyzes the isomerization between 2-isopropylmalate and 3-isopropylmalate, via the formation of 2-isopropylmaleate. This is 3-isopropylmalate dehydratase small subunit 2 from Salmonella choleraesuis (strain SC-B67).